The following is a 1247-amino-acid chain: Structural polyprotein (1247 aa).

Residues 36 to 67 are host transcription inhibition; that stretch reads RPAGQLAQLISAVSRLALRTVPQKPRRTRKIK. Residues 54 to 103 are disordered; sequence RTVPQKPRRTRKIKKQKQVKQEQQSTTNQKKKAPKQKQTQKKKRPGRRER. 2 stretches are compositionally biased toward basic residues: residues 59-71 and 82-100; these read KPRRTRKIKKQKQ and QKKKAPKQKQTQKKKRPGR. Residues 60 to 98 carry the Nuclear localization signal motif; it reads PRRTRKIKKQKQVKQEQQSTTNQKKKAPKQKQTQKKKRP. Residues 83-113 form a binding to the viral RNA region; it reads KKKAPKQKQTQKKKRPGRRERMCMKIENDCI. Residues 98–112 form a ribosome-binding region; that stretch reads PGRRERMCMKIENDC. C112 and C127 form a disulfide bridge. The 149-residue stretch at 112-260 folds into the Peptidase S3 domain; sequence CIFEVRHEGK…KITPEGSVEW (149 aa). H138 serves as the catalytic Charge relay system. A Nuclear export signal motif is present at residues 143–153; the sequence is IDNADLAKLAF. The interaction with spike glycoprotein E2 stretch occupies residues 154–159; that stretch reads KRSSKY. The active-site Charge relay system is D160. Residues 182 to 192 are dimerization of the capsid protein; that stretch reads PEGYYNWHHGA. The active-site Charge relay system is S212. Residues 218–222 form a dimerization of the capsid protein region; it reads DNKGR. Residues 261 to 273 are functions as an uncleaved signal peptide for the precursor of protein E3/E2; it reads SLALPVMCLLANT. Intrachain disulfides connect C268–C277, C282–C286, C285–C317, C343–C449, C346–C352, C415–C429, C477–C590, C525–C549, and C527–C544. The N-linked (GlcNAc...) asparagine; by host glycan is linked to N272. 2 N-linked (GlcNAc...) asparagine; by host glycosylation sites follow: N587 and N669. Residues 692–712 form a helical membrane-spanning segment; that stretch reads IAVLAAASIVITSLVGLSLGM. Residues 715–719 are interaction with the capsid protein; the sequence is CARRR. Residues C720, C740, and C741 are each lipidated (S-palmitoyl cysteine; by host). A helical transmembrane segment spans residues 720–740; that stretch reads CITPYELTPGATIPFLLGVLC. A transient transmembrane before p62-6K protein processing region spans residues 720–740; it reads CITPYELTPGATIPFLLGVLC. C720 and C741 form a disulfide bridge. The helical transmembrane segment at 763-783 threads the bilayer; it reads PLFWLQLLIPLSAAIVVCNCL. Disulfide bonds link C857/C922, C870/C902, C871/C904, and C876/C886. An E1 fusion peptide loop region spans residues 892-909; sequence VYPFMWGGAYCFCDAENT. N949 and N1078 each carry an N-linked (GlcNAc...) asparagine; by host glycan. Disulfide bonds link C1067-C1079, C1109-C1184, C1114-C1188, and C1136-C1178. The chain crosses the membrane as a helical span at residues 1224–1244; sequence GVGLVVAIAALILIIVLCVSF. C1241 is lipidated: S-palmitoyl cysteine; by host. The S-stearoyl cysteine; by host moiety is linked to residue C1241.

As to quaternary structure, homodimer. Homomultimer. Interacts with host karyopherin KPNA4; this interaction allows the nuclear import of the viral capsid protein. Interacts with spike glycoprotein E2. Interacts with host IRAK1; the interaction leads to inhibition of IRAK1-dependent signaling. The precursor of protein E3/E2 and E1 form a heterodimer shortly after synthesis. In terms of assembly, the precursor of protein E3/E2 and E1 form a heterodimer shortly after synthesis. Processing of the precursor of protein E3/E2 into E2 and E3 results in a heterodimer of the spike glycoproteins E2 and E1. Spike at virion surface are constituted of three E2-E1 heterodimers. After target cell attachment and endocytosis, E1 change conformation to form homotrimers. Interacts with 6K protein. As to quaternary structure, interacts with spike glycoprotein E1. Processing of the precursor of protein E3/E2 into E2 and E3 results in a heterodimer of the spike glycoproteins E2 and E1. Spike at virion surface are constituted of a trimer of E2-E1 heterodimers. Interacts with 6K protein. Interacts with host MXRA8; this interaction mediates virus entry. Oligomer. Interacts with spike glycoprotein E1. Interacts with spike glycoprotein E2. In terms of processing, structural polyprotein: Specific enzymatic cleavages in vivo yield mature proteins. Capsid protein is auto-cleaved during polyprotein translation, unmasking a signal peptide at the N-terminus of the precursor of E3/E2. The remaining polyprotein is then targeted to the host endoplasmic reticulum, where host signal peptidase cleaves it into pE2, 6K and E1 proteins. pE2 is further processed to mature E3 and E2 by host furin in trans-Golgi vesicle. Palmitoylated via thioester bonds. These palmitoylations may induce disruption of the C-terminus transmembrane. This would result in the reorientation of E2 C-terminus from lumenal to cytoplasmic side. Post-translationally, N-glycosylated. In terms of processing, palmitoylated via thioester bonds.

The protein resides in the virion. Its subcellular location is the host cytoplasm. It is found in the host cell membrane. The protein localises to the host nucleus. It localises to the virion membrane. The protein resides in the host Golgi apparatus. Its subcellular location is the host trans-Golgi network. It is found in the host endoplasmic reticulum. It carries out the reaction Autocatalytic release of the core protein from the N-terminus of the togavirus structural polyprotein by hydrolysis of a -Trp-|-Ser- bond.. Its function is as follows. Forms an icosahedral capsid with a T=4 symmetry composed of 240 copies of the capsid protein surrounded by a lipid membrane through which penetrate 80 spikes composed of trimers of E1-E2 heterodimers. The capsid protein binds to the viral RNA genome at a site adjacent to a ribosome binding site for viral genome translation following genome release. Possesses a protease activity that results in its autocatalytic cleavage from the nascent structural protein. Following its self-cleavage, the capsid protein transiently associates with ribosomes, and within several minutes the protein binds to viral RNA and rapidly assembles into icosahedric core particles. The resulting nucleocapsid eventually associates with the cytoplasmic domain of the spike glycoprotein E2 at the cell membrane, leading to budding and formation of mature virions. In case of infection, new virions attach to target cells and after clathrin-mediated endocytosis their membrane fuses with the host endosomal membrane. This leads to the release of the nucleocapsid into the cytoplasm, followed by an uncoating event necessary for the genomic RNA to become accessible. The uncoating might be triggered by the interaction of capsid proteins with ribosomes. Binding of ribosomes would release the genomic RNA since the same region is genomic RNA-binding and ribosome-binding. Specifically inhibits interleukin-1 receptor-associated kinase 1/IRAK1-dependent signaling during viral entry, representing a means by which the alphaviruses may evade innate immune detection and activation prior to viral gene expression. In terms of biological role, provides the signal sequence for the translocation of the precursor of protein E3/E2 to the host endoplasmic reticulum. Furin-cleaved E3 remains associated with spike glycoprotein E1 and mediates pH protection of the latter during the transport via the secretory pathway. After virion release from the host cell, the assembly protein E3 is gradually released in the extracellular space. Functionally, plays a role in viral attachment to target host cell, by binding to the cell receptor MXRA8. Synthesized as a p62 precursor which is processed by furin at the cell membrane just before virion budding, giving rise to E2-E1 heterodimer. The p62-E1 heterodimer is stable, whereas E2-E1 is unstable and dissociate at low pH. p62 is processed at the last step, presumably to avoid E1 fusion activation before its final export to cell surface. E2 C-terminus contains a transitory transmembrane that would be disrupted by palmitoylation, resulting in reorientation of the C-terminal tail from lumenal to cytoplasmic side. This step is critical since E2 C-terminus is involved in budding by interacting with capsid proteins. This release of E2 C-terminus in cytoplasm occurs lately in protein export, and precludes premature assembly of particles at the endoplasmic reticulum membrane. Acts as a viroporin that participates in virus glycoprotein processing and transport to the plasma membrane, cell permeabilization and budding of viral particles. Disrupts the calcium homeostasis of the cell, probably at the endoplasmic reticulum level. This leads to cytoplasmic calcium elevation. Because of its lipophilic properties, the 6K protein is postulated to influence the selection of lipids that interact with the transmembrane domains of the glycoproteins, which, in turn, affects the deformability of the bilayer required for the extreme curvature that occurs as budding proceeds. Present in low amount in virions, about 3% compared to viral glycoproteins. Its function is as follows. Class II viral fusion protein. Fusion activity is inactive as long as E1 is bound to E2 in mature virion. After virus attachment to target cell via host MXRA8 and endocytosis, acidification of the endosome induce dissociation of E1/E2 heterodimer and concomitant trimerization of the E1 subunits. This E1 trimer is fusion active, and promotes release of viral nucleocapsid in cytoplasm after endosome and viral membrane fusion. Efficient fusion requires the presence of cholesterol and sphingolipid in the target membrane. The chain is Structural polyprotein from O'nyong-nyong virus (strain Gulu) (ONNV).